The chain runs to 215 residues: FMN-dependent NADH:quinone oxidoreductase 1 (215 aa).

This sequence belongs to the azoreductase type 1 family. Homodimer. FMN serves as cofactor.

The enzyme catalyses 2 a quinone + NADH + H(+) = 2 a 1,4-benzosemiquinone + NAD(+). It carries out the reaction N,N-dimethyl-1,4-phenylenediamine + anthranilate + 2 NAD(+) = 2-(4-dimethylaminophenyl)diazenylbenzoate + 2 NADH + 2 H(+). In terms of biological role, quinone reductase that provides resistance to thiol-specific stress caused by electrophilic quinones. Its function is as follows. Also exhibits azoreductase activity. Catalyzes the reductive cleavage of the azo bond in aromatic azo compounds to the corresponding amines. This chain is FMN-dependent NADH:quinone oxidoreductase 1, found in Lactiplantibacillus plantarum (strain ATCC BAA-793 / NCIMB 8826 / WCFS1) (Lactobacillus plantarum).